The primary structure comprises 226 residues: Fibrillarin-like rRNA/tRNA 2'-O-methyltransferase (226 aa).

Residues 82-83 (TT), 100-101 (EF), 125-126 (DA), and 145-148 (DVAQ) contribute to the S-adenosyl-L-methionine site.

Belongs to the methyltransferase superfamily. Fibrillarin family. Interacts with nop5. Component of box C/D small ribonucleoprotein (sRNP) particles that contain rpl7ae, FlpA and nop5, plus a guide RNA.

Its function is as follows. Involved in pre-rRNA and tRNA processing. Utilizes the methyl donor S-adenosyl-L-methionine to catalyze the site-specific 2'-hydroxyl methylation of ribose moieties in rRNA and tRNA. Site specificity is provided by a guide RNA that base pairs with the substrate. Methylation occurs at a characteristic distance from the sequence involved in base pairing with the guide RNA. The polypeptide is Fibrillarin-like rRNA/tRNA 2'-O-methyltransferase (Methanosarcina barkeri (strain Fusaro / DSM 804)).